The following is a 148-amino-acid chain: MKRVLVIHGPNVNLTGKREKEVYGEITFEEINNMIKREAAKLDIAVKIQQSNSEGEIINLIHSAENNFDAIIINPAAYTHYSLAIMDAIASVSVPVIEVHISNIFGREEFRKVSVTASRCKGVITGFGPYSYILALYAVKFLEDSIGG.

Tyr-23 acts as the Proton acceptor in catalysis. Residues Asn-74, His-80, and Asp-87 each coordinate substrate. The Proton donor role is filled by His-100. Residues 101–102 (IS) and Arg-111 contribute to the substrate site.

The protein belongs to the type-II 3-dehydroquinase family. In terms of assembly, homododecamer.

The enzyme catalyses 3-dehydroquinate = 3-dehydroshikimate + H2O. It functions in the pathway metabolic intermediate biosynthesis; chorismate biosynthesis; chorismate from D-erythrose 4-phosphate and phosphoenolpyruvate: step 3/7. In terms of biological role, catalyzes a trans-dehydration via an enolate intermediate. The sequence is that of 3-dehydroquinate dehydratase from Caldanaerobacter subterraneus subsp. tengcongensis (strain DSM 15242 / JCM 11007 / NBRC 100824 / MB4) (Thermoanaerobacter tengcongensis).